Here is a 160-residue protein sequence, read N- to C-terminus: Large ribosomal subunit protein uL22c (160 aa).

This sequence belongs to the universal ribosomal protein uL22 family. In terms of assembly, part of the 50S ribosomal subunit.

The protein resides in the plastid. It localises to the chloroplast. This protein binds specifically to 23S rRNA. In terms of biological role, the globular domain of the protein is located near the polypeptide exit tunnel on the outside of the subunit, while an extended beta-hairpin is found that lines the wall of the exit tunnel in the center of the 70S ribosome. This is Large ribosomal subunit protein uL22c (rpl22) from Aethionema grandiflorum (Persian stone-cress).